The primary structure comprises 553 residues: Solute carrier family 2, facilitated glucose transporter member 10 (553 aa).

At 1-15 (MGLRSTTLVLAATSS) the chain is on the cytoplasmic side. A helical membrane pass occupies residues 16–36 (LLGGLIFGYELGIISGALLML). At 37 to 48 (KTVFQLTCFEQE) the chain is on the extracellular side. The helical transmembrane segment at 49–69 (ALVSAVLFGALLASLIGGFII) threads the bilayer. At 70 to 82 (DRSGRRTSIMGSN) the chain is on the cytoplasmic side. Residues 83-103 (LVVLAGSIILIATSSFWWLVV) traverse the membrane as a helical segment. Residues 104–105 (GR) lie on the Extracellular side of the membrane. Residues 106–126 (VTVGFAISISSMACCIYVSEI) form a helical membrane-spanning segment. Topologically, residues 127–132 (VRPHQR) are cytoplasmic. Residues 133–153 (GTLVSLYETGITVGILISYAM) form a helical membrane-spanning segment. The Extracellular segment spans residues 154 to 165 (NYFLSAVNDGWK). A helical transmembrane segment spans residues 166-186 (YMFGLAIIPAAFQFIVILFLP). At 187 to 240 (SKPHTLNFWEQDSDNGFIELEEAGESGEFKPDTYDKQYTFLDLFRSKDNMRTRT) the chain is on the cytoplasmic side. The helical transmembrane segment at 241–261 (LLGLGLVLFQQFTGQPNVLYY) threads the bilayer. A D-glucose-binding site is contributed by 250-251 (QQ). Residues 262 to 277 (ASTIFRSVGFQSNSSA) lie on the Extracellular side of the membrane. Asn-274 carries an N-linked (GlcNAc...) asparagine glycan. A helical membrane pass occupies residues 278–298 (VLASVGLGVVKVASTLIAICF). Over 299 to 305 (ADKAGRR) the chain is Cytoplasmic. A helical membrane pass occupies residues 306–326 (ILLLAGCIVMTIAISGIGIVS). The Extracellular portion of the chain corresponds to 327–413 (FMVELDSHRD…PPAGPDSNYA (87 aa)). N-linked (GlcNAc...) asparagine glycosylation is found at Asn-344, Asn-351, and Asn-400. The chain crosses the membrane as a helical span at residues 414 to 434 (ILNWITLLSMMAFVSAFSIGF). At 435 to 462 (GPMTWLVLSEIYPADIRGRAFAFCNSFN) the chain is on the cytoplasmic side. Trp-439 is a binding site for D-glucose. A helical membrane pass occupies residues 463–482 (WAANLLITLTFLEVIGSIGL). Position 483 (Gly-483) is a topological domain, extracellular. A helical transmembrane segment spans residues 484-504 (WTFLLYGGVGLLAIAFIYFFI). The Cytoplasmic segment spans residues 505–553 (PETKGQSLEEIDQQLSSKRISKRRETSKGVRKRPSTGPPYQRVGKSNWT). The tract at residues 522-553 (KRISKRRETSKGVRKRPSTGPPYQRVGKSNWT) is disordered.

Belongs to the major facilitator superfamily. Sugar transporter (TC 2.A.1.1) family. Glucose transporter subfamily.

It localises to the endomembrane system. Its subcellular location is the cytoplasm. The protein resides in the perinuclear region. It catalyses the reaction D-glucose(out) = D-glucose(in). Functionally, facilitative glucose transporter required for the development of the cardiovascular system. In Xenopus laevis (African clawed frog), this protein is Solute carrier family 2, facilitated glucose transporter member 10.